The following is a 331-amino-acid chain: Phosphoribosylformylglycinamidine cyclo-ligase (331 aa).

It belongs to the AIR synthase family.

The protein localises to the cytoplasm. It carries out the reaction 2-formamido-N(1)-(5-O-phospho-beta-D-ribosyl)acetamidine + ATP = 5-amino-1-(5-phospho-beta-D-ribosyl)imidazole + ADP + phosphate + H(+). It participates in purine metabolism; IMP biosynthesis via de novo pathway; 5-amino-1-(5-phospho-D-ribosyl)imidazole from N(2)-formyl-N(1)-(5-phospho-D-ribosyl)glycinamide: step 2/2. This chain is Phosphoribosylformylglycinamidine cyclo-ligase, found in Clostridium novyi (strain NT).